Here is a 187-residue protein sequence, read N- to C-terminus: Ribonuclease HII (187 aa).

The 187-residue stretch at 1-187 folds into the RNase H type-2 domain; sequence MIILGIDEAG…YKPVQVLLNE (187 aa). Residues Asp-7, Glu-8, and Asp-99 each contribute to the a divalent metal cation site.

The protein belongs to the RNase HII family. The cofactor is Mn(2+). It depends on Mg(2+) as a cofactor.

It is found in the cytoplasm. The catalysed reaction is Endonucleolytic cleavage to 5'-phosphomonoester.. Endonuclease that specifically degrades the RNA of RNA-DNA hybrids. In Francisella tularensis subsp. tularensis (strain FSC 198), this protein is Ribonuclease HII.